The following is a 634-amino-acid chain: (-)-limonene synthase, chloroplastic (634 aa).

The transit peptide at 1–21 (MSPVSAIPLAYKLCLPRSLIS) directs the protein to the chloroplast. R348, D385, D389, R526, and G529 together coordinate (2E)-geranyl diphosphate. D385 and D389 together coordinate Mg(2+). The DDXXD motif signature appears at 385 to 389 (DDIYD). G529 and D537 together coordinate Mg(2+).

It belongs to the terpene synthase family. Tpsb subfamily. Monomer. Mg(2+) is required as a cofactor. The cofactor is Mn(2+).

The protein localises to the plastid. Its subcellular location is the chloroplast. It catalyses the reaction (2E)-geranyl diphosphate = (4S)-limonene + diphosphate. It functions in the pathway secondary metabolite biosynthesis; terpenoid biosynthesis. It participates in terpene metabolism; oleoresin biosynthesis. Monoterpene synthase (mono-TPS) involved in the biosynthesis of monoterpene natural products. Catalyzes the conversion of (2E)-geranyl diphosphate (GPP) into (-)-limonene. Not able to use geranylgeranyl pyrophosphate (GGPP) and farnesyl pyrophosphate (FPP) as substrates. The chain is (-)-limonene synthase, chloroplastic from Picea sitchensis (Sitka spruce).